A 139-amino-acid polypeptide reads, in one-letter code: CLAVATA3/ESR (CLE)-related protein 1 (139 aa).

The signal sequence occupies residues Met-1–Ala-22. The tract at residues Ser-23–Met-90 is required for secretion from the host cytoplasm to the host apoplasm. N-linked (GlcNAc...) asparagine glycosylation is found at Asn-37 and Asn-87. Positions Ala-66 to His-139 are disordered. Positions Glu-100 to Asp-125 form a coiled coil. Positions Arg-106–Arg-128 are enriched in basic and acidic residues. The CLE motif lies at Arg-128–His-139.

This sequence belongs to the CLV3/ESR signal peptide family. As to expression, highly expressed exclusively within the dorsal esophageal gland cell during syncytium formation in host plants (at protein level).

It is found in the secreted. The protein localises to the host cytoplasm. Its subcellular location is the host extracellular space. It localises to the extracellular space. The protein resides in the apoplast. Functionally, mimics host plant CLE extracellular signal peptides that regulate cell fate. May play a role in the differentiation or division of feeding cells (syncytia) induced in plant roots during infection. In Heterodera glycines (Soybean cyst nematode worm), this protein is CLAVATA3/ESR (CLE)-related protein 1 (CLE1).